The following is a 358-amino-acid chain: UDP-N-acetylglucosamine--N-acetylmuramyl-(pentapeptide) pyrophosphoryl-undecaprenol N-acetylglucosamine transferase (358 aa).

Residues 11–13, asparagine 120, arginine 161, serine 188, and glutamine 282 contribute to the UDP-N-acetyl-alpha-D-glucosamine site; that span reads TGG.

It belongs to the glycosyltransferase 28 family. MurG subfamily.

It localises to the cell inner membrane. It catalyses the reaction di-trans,octa-cis-undecaprenyl diphospho-N-acetyl-alpha-D-muramoyl-L-alanyl-D-glutamyl-meso-2,6-diaminopimeloyl-D-alanyl-D-alanine + UDP-N-acetyl-alpha-D-glucosamine = di-trans,octa-cis-undecaprenyl diphospho-[N-acetyl-alpha-D-glucosaminyl-(1-&gt;4)]-N-acetyl-alpha-D-muramoyl-L-alanyl-D-glutamyl-meso-2,6-diaminopimeloyl-D-alanyl-D-alanine + UDP + H(+). Its pathway is cell wall biogenesis; peptidoglycan biosynthesis. Its function is as follows. Cell wall formation. Catalyzes the transfer of a GlcNAc subunit on undecaprenyl-pyrophosphoryl-MurNAc-pentapeptide (lipid intermediate I) to form undecaprenyl-pyrophosphoryl-MurNAc-(pentapeptide)GlcNAc (lipid intermediate II). In Parasynechococcus marenigrum (strain WH8102), this protein is UDP-N-acetylglucosamine--N-acetylmuramyl-(pentapeptide) pyrophosphoryl-undecaprenol N-acetylglucosamine transferase.